Here is a 78-residue protein sequence, read N- to C-terminus: Omega-conotoxin-like VnMKLT1-0111 (78 aa).

Positions 1–22 are cleaved as a signal peptide; sequence MKLTCMMIVAVLFLTAWTFVTA. A propeptide spanning residues 23–48 is cleaved from the precursor; it reads DSRNGLEYLFPKAHYEMNPEASKLNK. 3 disulfides stabilise this stretch: Cys52–Cys69, Cys59–Cys73, and Cys68–Cys77.

The protein belongs to the conotoxin O1 superfamily. In terms of tissue distribution, expressed by the venom duct.

It localises to the secreted. In terms of biological role, omega-conotoxins act at presynaptic membranes, they bind and block voltage-gated calcium channels (Cav). This chain is Omega-conotoxin-like VnMKLT1-0111, found in Conus ventricosus (Mediterranean cone).